A 383-amino-acid chain; its full sequence is MSPEIALNRISPMLSPFISSVVRNGKVGLDATNCLRITDLKSGCTSLTPGPNCDRFKLHIPYAGETLKWDIIFNAQYPELPPDFIFGEDAEFLPDPSALHNLASWNPSNPECLLLVVKELVQQYHQFQCGRLRESSRLMFEYQTLLEEPQYGENMEIYAGKKNNWTGEFSARFLLKLPVDFSNIPTYLLKDVNEDPGEDVALLSVSFEDTEATQVYPKLYLSPRIEHALGGSSALHIPAFPGGGCLIDYVPQVCHLLTNKVQYVIQGYHKRREYIAAFLSHFGTGVVEYDAEGFTKLTLLLMWKEFCFLVHIDLPLFFPRDQPTLTFQSVYHFTNSGQLYSQAQKNYPYSPRWDGNEMAKRAKAYFKTFVPQFQEAAFANGKL.

M1 is subject to N-acetylmethionine. S2 carries the phosphoserine modification. UEV-like regions lie at residues 30-147 (DATN…TLLE) and 275-364 (IAAF…RAKA).

This sequence belongs to the BABAM2 family. As to quaternary structure, component of the ARISC complex, at least composed of UIMC1/RAP80, ABRAXAS1, BRCC3/BRCC36, BABAM2 and BABAM1/NBA1. Component of the BRCA1-A complex, at least composed of BRCA1, BARD1, UIMC1/RAP80, ABRAXAS1, BRCC3/BRCC36, BABAM2 and BABAM1/NBA1. In the BRCA1-A complex, interacts directly with ABRAXAS1, BRCC3/BRCC36 and BABAM1/NBA1. Binds polyubiquitin. Component of the BRISC complex, at least composed of ABRAXAS2, BRCC3/BRCC36, BABAM2 and BABAM1/NBA1. Identified in a complex with SHMT2 and the other subunits of the BRISC complex. Component of the BRCA1/BRCA2 containing complex (BRCC), which also contains BRCA1, BRCA2, BARD1, BRCC3/BRCC36 and RAD51. BRCC is a ubiquitin E3 ligase complex that enhances cellular survival following DNA damage. May interact with FAS and TNFRSF1A.

It is found in the cytoplasm. It localises to the nucleus. Functionally, component of the BRCA1-A complex, a complex that specifically recognizes 'Lys-63'-linked ubiquitinated histones H2A and H2AX at DNA lesions sites, leading to target the BRCA1-BARD1 heterodimer to sites of DNA damage at double-strand breaks (DSBs). The BRCA1-A complex also possesses deubiquitinase activity that specifically removes 'Lys-63'-linked ubiquitin on histones H2A and H2AX. In the BRCA1-A complex, it acts as an adapter that bridges the interaction between BABAM1/NBA1 and the rest of the complex, thereby being required for the complex integrity and modulating the E3 ubiquitin ligase activity of the BRCA1-BARD1 heterodimer. Component of the BRISC complex, a multiprotein complex that specifically cleaves 'Lys-63'-linked ubiquitin in various substrates. Within the BRISC complex, acts as an adapter that bridges the interaction between BABAM1/NBA1 and the rest of the complex, thereby being required for the complex integrity. The BRISC complex is required for normal mitotic spindle assembly and microtubule attachment to kinetochores via its role in deubiquitinating NUMA1. The BRISC complex plays a role in interferon signaling via its role in the deubiquitination of the interferon receptor IFNAR1; deubiquitination increases IFNAR1 activity by enhancing its stability and cell surface expression. Down-regulates the response to bacterial lipopolysaccharide (LPS) via its role in IFNAR1 deubiquitination. May play a role in homeostasis or cellular differentiation in cells of neural, epithelial and germline origins. May also act as a death receptor-associated anti-apoptotic protein, which inhibits the mitochondrial apoptotic pathway. May regulate TNF-alpha signaling through its interactions with TNFRSF1A; however these effects may be indirect. The chain is BRISC and BRCA1-A complex member 2 from Rattus norvegicus (Rat).